Consider the following 417-residue polypeptide: SNF1 protein kinase subunit beta-3 (417 aa).

A compositionally biased stretch (basic and acidic residues) spans 1–12 (MAGDNPENKDAS). Positions 1–37 (MAGDNPENKDASMLDVSDAASNTTINGKHSADSTNEA) are disordered. Serine 12, serine 21, serine 44, and serine 135 each carry phosphoserine. Polar residues predominate over residues 19 to 37 (AASNTTINGKHSADSTNEA). 2 disordered regions span residues 64 to 155 (SSLI…VEGK) and 250 to 269 (GNEP…DDSK). Polar residues predominate over residues 118–136 (TGNTLQKMDYQPSQQPDSL). Residues 137–149 (QNQGFQQQQEQQQ) show a composition bias toward low complexity. The interval 152-342 (VEGKKGRAMM…DQQQNNHQNM (191 aa)) is kinase-interacting sequence (KIS); required for interaction with SNF1. Residues 257–269 (LAEKKANHVDDSK) are compositionally biased toward basic and acidic residues. Residues serine 276 and serine 279 each carry the phosphoserine modification. The tract at residues 343 to 417 (AWLTPPQLPP…VTQILYTPLQ (75 aa)) is association with SNF1 kinase complex (ASC) domain; required for interaction with SNF4.

The protein belongs to the 5'-AMP-activated protein kinase beta subunit family. In terms of assembly, component of the SNF1 kinase complex, a heterotrimeric complex composed of the catalytic alpha subunit SNF1, one of the three related beta subunits SIP1, SIP2 or GAL83, and the regulatory gamma subunit SNF4. The beta subunit serves as a bridge between the catalytic and the regulatory subunit. Interacts (via KIS domain) with SNF1. Interacts (via ASC domain) with SNF4. Interacts with REE1. Phosphorylated by SNF1 in vitro.

It is found in the cytoplasm. Its subcellular location is the nucleus. Beta subunit of the SNF1 kinase complex, which is required for transcriptional, metabolic, and developmental adaptations in response to glucose limitation. Has a structural role, mediating heterotrimer formation, and a regulatory role, defining carbon source-regulated subcellular location and substrate specificity of the SNF1 kinase complex. Promotes the relocalization of the SNF1 kinase complex to the nucleus upon shift to nonfermentable carbon sources. In Saccharomyces cerevisiae (strain ATCC 204508 / S288c) (Baker's yeast), this protein is SNF1 protein kinase subunit beta-3 (GAL83).